Reading from the N-terminus, the 424-residue chain is Tol-Pal system protein TolB (424 aa).

The N-terminal stretch at 1-20 (MKQFIVFILSLYTTLSWAVL) is a signal peptide.

This sequence belongs to the TolB family. As to quaternary structure, the Tol-Pal system is composed of five core proteins: the inner membrane proteins TolA, TolQ and TolR, the periplasmic protein TolB and the outer membrane protein Pal. They form a network linking the inner and outer membranes and the peptidoglycan layer.

The protein resides in the periplasm. Functionally, part of the Tol-Pal system, which plays a role in outer membrane invagination during cell division and is important for maintaining outer membrane integrity. This chain is Tol-Pal system protein TolB, found in Vesicomyosocius okutanii subsp. Calyptogena okutanii (strain HA).